We begin with the raw amino-acid sequence, 91 residues long: ATP synthase epsilon chain (91 aa).

The protein belongs to the ATPase epsilon chain family. F-type ATPases have 2 components, CF(1) - the catalytic core - and CF(0) - the membrane proton channel. CF(1) has five subunits: alpha(3), beta(3), gamma(1), delta(1), epsilon(1). CF(0) has three main subunits: a, b and c.

The protein resides in the cell membrane. Produces ATP from ADP in the presence of a proton gradient across the membrane. In Micrococcus luteus (strain ATCC 4698 / DSM 20030 / JCM 1464 / CCM 169 / CCUG 5858 / IAM 1056 / NBRC 3333 / NCIMB 9278 / NCTC 2665 / VKM Ac-2230) (Micrococcus lysodeikticus), this protein is ATP synthase epsilon chain (atpC).